A 398-amino-acid chain; its full sequence is Metallophosphoesterase 1 (398 aa).

Residues 25–45 form a helical membrane-spanning segment; that stretch reads VCFVSSVLIFCEFFIYYLVIF. Residues D75, D117, N155, H251, H305, and H307 each contribute to the a divalent metal cation site. The helical transmembrane segment at 359–379 threads the bilayer; that stretch reads VFAIYWAAGALLVVLVLAHFQ. The Di-lysine motif motif lies at 394–398; that stretch reads KHKAA.

The protein belongs to the metallophosphoesterase superfamily. MPPE1 family. It depends on Mn(2+) as a cofactor.

The protein resides in the endoplasmic reticulum-Golgi intermediate compartment membrane. Its function is as follows. Metallophosphoesterase that catalyzes the removal of a side-chain ethanolamine-phosphate (EtNP) from the second mannose of the GPI-anchor protein intermediate. Participates in the glycan remodeling steps of GPI-anchor maturation to allow an efficient transport of GPI-anchor proteins from the endoplasmic reticulum to the Golgi. This Gallus gallus (Chicken) protein is Metallophosphoesterase 1.